The chain runs to 523 residues: Heparanase (523 aa).

A signal peptide spans 1-18; it reads MLVLLLLVLLLAVPPRRT. Heparan sulfate group contacts are provided by residues 42-44, Thr-77, and 137-141; these read DAS and KKHKN. N-linked (GlcNAc...) asparagine glycosylation is found at Asn-141 and Asn-196. Glu-204 acts as the Proton donor in catalysis. Residues 250–260, His-276, and Arg-283 contribute to the heparan sulfate group site; that span reads QPRKHTQHLLR. Residues 268-397 form a required for heterodimerization with the heparanase 8 kDa subunit region; sequence KAIDSVTWHH…LLYKRLVGTR (130 aa). Glu-323 acts as the Nucleophile in catalysis. Heparan sulfate group contacts are provided by residues 328–330 and 369–371; these read YGG and GSY. The cysteines at positions 417 and 522 are disulfide-linked. Asn-436 and Asn-439 each carry an N-linked (GlcNAc...) asparagine glycan. The interval 507 to 523 is required for transferring proheparanase to the Golgi apparatus, secretion and subsequent enzyme activity and for enhancement of PKB/AKT1 phosphorylation; the sequence is FSYGFYVIRNAKAIACI.

This sequence belongs to the glycosyl hydrolase 79 family. Heterodimer; the active enzyme is a heterodimer of the 60 kDa and 45 kDa proteolytic products. In terms of processing, N-glycosylated. Post-translationally, proteolytically cleaved to produce a 60 kDa and a 45 kDa product.

It localises to the secreted. It carries out the reaction endohydrolysis of (1-&gt;4)-beta-D-glycosidic bonds of heparan sulfate chains in heparan sulfate proteoglycan.. In terms of biological role, endoglycosidase that cleaves heparan sulfate proteoglycans (HSPGs) into heparan sulfate side chains and core proteoglycans. Participates in extracellular matrix (ECM) degradation and remodeling. Selectively cleaves the linkage between a glucuronic acid unit and an N-sulfo glucosamine unit carrying either a 3-O-sulfo or a 6-O-sulfo group. Can also cleave the linkage between a glucuronic acid unit and an N-sulfo glucosamine unit carrying a 2-O-sulfo group, but not linkages between a glucuronic acid unit and a 2-O-sulfated iduronic acid moiety. Increases cell adhesion to the extracellular matrix (ECM), independent of its enzymatic activity. The protein is Heparanase (HPSE) of Gallus gallus (Chicken).